We begin with the raw amino-acid sequence, 141 residues long: Hemoglobin subunit alpha-1/2 (141 aa).

Residues 1–141 (VLSPADKTNV…VSTVLTSKYR (141 aa)) enclose the Globin domain. Residue S3 is modified to Phosphoserine. The residue at position 7 (K7) is an N6-succinyllysine. Position 8 is a phosphothreonine (T8). Residue K11 is modified to N6-succinyllysine. K16 is subject to N6-acetyllysine; alternate. K16 carries the N6-succinyllysine; alternate modification. The residue at position 24 (Y24) is a Phosphotyrosine. S35 carries the phosphoserine modification. Position 40 is an N6-succinyllysine (K40). At S49 the chain carries Phosphoserine. Position 58 (H58) interacts with O2. Heme b is bound at residue H87. S102 bears the Phosphoserine mark. The residue at position 108 (T108) is a Phosphothreonine. S124 is modified (phosphoserine). Phosphothreonine occurs at positions 134 and 137. A Phosphoserine modification is found at S138.

This sequence belongs to the globin family. As to quaternary structure, heterotetramer of two alpha chains and two beta chains. As to expression, red blood cells.

Involved in oxygen transport from the lung to the various peripheral tissues. This Mustela lutreola (European mink) protein is Hemoglobin subunit alpha-1/2.